Here is a 119-residue protein sequence, read N- to C-terminus: MHEYSIVTALLELCENHAKSNKAKKVTKVVVALGERSGVEPQLLESAFEVFKLDSVCAESELVIETKPMKFRCRSCGAEFLPKGIDFGSCEVCKAPNPELVGGKEMHLQSLEMEAEDEG.

His-2 provides a ligand contact to Ni(2+). Cys-73, Cys-76, Cys-90, and Cys-93 together coordinate Zn(2+).

Belongs to the HypA/HybF family.

In terms of biological role, involved in the maturation of [NiFe] hydrogenases. Required for nickel insertion into the metal center of the hydrogenase. The protein is Hydrogenase maturation factor HypA of Wolinella succinogenes (strain ATCC 29543 / DSM 1740 / CCUG 13145 / JCM 31913 / LMG 7466 / NCTC 11488 / FDC 602W) (Vibrio succinogenes).